Here is a 258-residue protein sequence, read N- to C-terminus: NAD(P)H-hydrate epimerase (258 aa).

The YjeF N-terminal domain occupies 15–244 (AFQLDQELMS…RIAKEYGIED (230 aa)). Residue 75-79 (NNGGD) participates in (6S)-NADPHX binding. K(+)-binding residues include N76 and D145. (6S)-NADPHX is bound by residues 149–155 (GFSFKPP) and D181. A K(+)-binding site is contributed by S184.

The protein belongs to the NnrE/AIBP family. K(+) is required as a cofactor.

Its subcellular location is the cytoplasm. The protein localises to the mitochondrion. The enzyme catalyses (6R)-NADHX = (6S)-NADHX. It carries out the reaction (6R)-NADPHX = (6S)-NADPHX. Its function is as follows. Catalyzes the epimerization of the S- and R-forms of NAD(P)HX, a damaged form of NAD(P)H that is a result of enzymatic or heat-dependent hydration. This is a prerequisite for the S-specific NAD(P)H-hydrate dehydratase to allow the repair of both epimers of NAD(P)HX. The chain is NAD(P)H-hydrate epimerase from Candida albicans (strain WO-1) (Yeast).